Here is a 57-residue protein sequence, read N- to C-terminus: UPF0391 membrane protein Atu4467 (57 aa).

Helical transmembrane passes span 4 to 24 (WALI…TGIS) and 33 to 53 (ILFF…LMAG).

The protein belongs to the UPF0391 family.

It localises to the cell membrane. The polypeptide is UPF0391 membrane protein Atu4467 (Agrobacterium fabrum (strain C58 / ATCC 33970) (Agrobacterium tumefaciens (strain C58))).